The primary structure comprises 417 residues: Serine hydroxymethyltransferase (417 aa).

Residues Leu121 and 125–127 (GHL) each bind (6S)-5,6,7,8-tetrahydrofolate. N6-(pyridoxal phosphate)lysine is present on Lys229. 355–357 (SPF) serves as a coordination point for (6S)-5,6,7,8-tetrahydrofolate.

This sequence belongs to the SHMT family. In terms of assembly, homodimer. The cofactor is pyridoxal 5'-phosphate.

The protein resides in the cytoplasm. It catalyses the reaction (6R)-5,10-methylene-5,6,7,8-tetrahydrofolate + glycine + H2O = (6S)-5,6,7,8-tetrahydrofolate + L-serine. It functions in the pathway one-carbon metabolism; tetrahydrofolate interconversion. The protein operates within amino-acid biosynthesis; glycine biosynthesis; glycine from L-serine: step 1/1. Catalyzes the reversible interconversion of serine and glycine with tetrahydrofolate (THF) serving as the one-carbon carrier. This reaction serves as the major source of one-carbon groups required for the biosynthesis of purines, thymidylate, methionine, and other important biomolecules. Also exhibits THF-independent aldolase activity toward beta-hydroxyamino acids, producing glycine and aldehydes, via a retro-aldol mechanism. The chain is Serine hydroxymethyltransferase from Shewanella baltica (strain OS195).